The following is a 76-amino-acid chain: Small ribosomal subunit protein bS16 (76 aa).

Belongs to the bacterial ribosomal protein bS16 family.

The polypeptide is Small ribosomal subunit protein bS16 (Helicobacter acinonychis (strain Sheeba)).